The following is a 142-amino-acid chain: Aspartate 1-decarboxylase (142 aa).

S25 (schiff-base intermediate with substrate; via pyruvic acid) is an active-site residue. S25 is subject to Pyruvic acid (Ser). A substrate-binding site is contributed by T57. The Proton donor role is filled by Y58. 73–75 (GAA) contacts substrate.

The protein belongs to the PanD family. In terms of assembly, heterooctamer of four alpha and four beta subunits. Pyruvate is required as a cofactor. In terms of processing, is synthesized initially as an inactive proenzyme, which is activated by self-cleavage at a specific serine bond to produce a beta-subunit with a hydroxyl group at its C-terminus and an alpha-subunit with a pyruvoyl group at its N-terminus.

It localises to the cytoplasm. The catalysed reaction is L-aspartate + H(+) = beta-alanine + CO2. It participates in cofactor biosynthesis; (R)-pantothenate biosynthesis; beta-alanine from L-aspartate: step 1/1. Functionally, catalyzes the pyruvoyl-dependent decarboxylation of aspartate to produce beta-alanine. The polypeptide is Aspartate 1-decarboxylase (Arthrobacter sp. (strain FB24)).